We begin with the raw amino-acid sequence, 255 residues long: 5-oxoprolinase subunit A (255 aa).

Belongs to the LamB/PxpA family. In terms of assembly, forms a complex composed of PxpA, PxpB and PxpC.

The catalysed reaction is 5-oxo-L-proline + ATP + 2 H2O = L-glutamate + ADP + phosphate + H(+). Its function is as follows. Catalyzes the cleavage of 5-oxoproline to form L-glutamate coupled to the hydrolysis of ATP to ADP and inorganic phosphate. This chain is 5-oxoprolinase subunit A, found in Pyrococcus abyssi (strain GE5 / Orsay).